The chain runs to 115 residues: Large ribosomal subunit protein bL19 (115 aa).

This sequence belongs to the bacterial ribosomal protein bL19 family.

In terms of biological role, this protein is located at the 30S-50S ribosomal subunit interface and may play a role in the structure and function of the aminoacyl-tRNA binding site. The sequence is that of Large ribosomal subunit protein bL19 from Streptococcus pyogenes serotype M49 (strain NZ131).